The primary structure comprises 875 residues: Alanine--tRNA ligase (875 aa).

Histidine 564, histidine 568, cysteine 666, and histidine 670 together coordinate Zn(2+).

It belongs to the class-II aminoacyl-tRNA synthetase family. Requires Zn(2+) as cofactor.

The protein resides in the cytoplasm. It catalyses the reaction tRNA(Ala) + L-alanine + ATP = L-alanyl-tRNA(Ala) + AMP + diphosphate. Catalyzes the attachment of alanine to tRNA(Ala) in a two-step reaction: alanine is first activated by ATP to form Ala-AMP and then transferred to the acceptor end of tRNA(Ala). Also edits incorrectly charged Ser-tRNA(Ala) and Gly-tRNA(Ala) via its editing domain. In Mannheimia succiniciproducens (strain KCTC 0769BP / MBEL55E), this protein is Alanine--tRNA ligase.